Here is a 471-residue protein sequence, read N- to C-terminus: Cytidine and dCMP deaminase domain-containing protein 1 (471 aa).

The segment at Met1–Asn27 is disordered. 2 CMP/dCMP-type deaminase domains span residues Leu57 to Glu153 and Gly312 to Gly460. 4 residues coordinate Zn(2+): His99, Cys124, Cys127, and His393. The active-site Proton donor is the Glu395. Zn(2+) is bound by residues Cys421 and Cys424.

It belongs to the cytidine and deoxycytidylate deaminase family. Requires Zn(2+) as cofactor.

The enzyme catalyses 2'-deoxycytidine + H2O + H(+) = 2'-deoxyuridine + NH4(+). The catalysed reaction is cytidine + H2O + H(+) = uridine + NH4(+). Catalyzes the deamination of cytidine and deoxycytidine into uridine and deoxyuridine, respectively. This is Cytidine and dCMP deaminase domain-containing protein 1 (cdadc1) from Danio rerio (Zebrafish).